The following is a 93-amino-acid chain: WAP four-disulfide core domain protein 13 (93 aa).

A signal peptide spans 1-22; the sequence is MKPVLPLQFLVVFCLALQLVPG. The WAP; atypical domain maps to 24–73; sequence PKQRVLKYILEPPPCISAPENCTHLCTMQEDCEKGFQCCSSFCGIVCSSE. Cystine bridges form between cysteine 45/cysteine 66, cysteine 49/cysteine 61, and cysteine 55/cysteine 70.

It localises to the secreted. In terms of biological role, putative acid-stable proteinase inhibitor. The sequence is that of WAP four-disulfide core domain protein 13 (WFDC13) from Homo sapiens (Human).